Here is a 660-residue protein sequence, read N- to C-terminus: Neurexin-2-beta (660 aa).

Gly residues predominate over residues 1–10 (MPPGGSGQGG). The interval 1-27 (MPPGGSGQGGCPRRPPALAGPLPPPPP) is disordered. The N-terminal stretch at 1–46 (MPPGGSGQGGCPRRPPALAGPLPPPPPPPPLPLLLGLLLLLGAAEG) is a signal peptide. Residues 47 to 584 (ARVSSSLSTT…EVIRESSSTT (538 aa)) are Extracellular-facing. One can recognise a Laminin G-like domain in the interval 87–295 (TTYIFGKGGA…HLRLVGEGPS (209 aa)). Ca(2+) contacts are provided by aspartate 139 and valine 156. N-linked (GlcNAc...) asparagine glycosylation is present at asparagine 186. Ca(2+)-binding residues include isoleucine 238 and asparagine 240. O-linked (Xyl...) (heparan sulfate) serine glycosylation is present at serine 350. Disordered stretches follow at residues 408-458 (ATQD…LPPT) and 537-571 (EPRR…RGPP). N-linked (GlcNAc...) asparagine glycosylation is present at asparagine 561. A helical transmembrane segment spans residues 585 to 605 (GMVVGIVAAAALCILILLYAM). The Cytoplasmic segment spans residues 606 to 660 (YKYRNRDEGSYQVDQSRNYISNSAQSNGAVVKEKAPAAPKTPSKAKKNKDKEYYV). The segment at 627 to 660 (NSAQSNGAVVKEKAPAAPKTPSKAKKNKDKEYYV) is disordered.

It belongs to the neurexin family. As to quaternary structure, interacts (via cytoplasmic C-terminal region) with CASK. Specific isoforms bind alpha-dystroglycan and neuroligins NLGN1, NLGN2 and NLGN3. Interacts with CBLN1, CBLN2 and, less avidly, with CBLN4. Interacts with CLSTN3. Post-translationally, O-glycosylated; contains heparan sulfate. Heparan sulfate attachment is required for synapse development by mediating interactions with neuroligins.

It is found in the presynaptic cell membrane. Functionally, neuronal cell surface protein that may be involved in cell recognition and cell adhesion. In Mus musculus (Mouse), this protein is Neurexin-2-beta.